The chain runs to 492 residues: Ammonium transporter MEP1 (492 aa).

Over 1 to 18 (MESRTTGPLTTETYDGPT) the chain is Extracellular. A helical transmembrane segment spans residues 19 to 39 (VAFMILGAALVFFMVPGLGFL). Topologically, residues 40-49 (YSGLARRKSA) are cytoplasmic. A helical transmembrane segment spans residues 50 to 70 (LALIWVVLMATLVGILQWYFW). Over 71-109 (GYSLAFSKSAPNNKFIGNLDSFGFRNVYGKKFDEDAYPE) the chain is Extracellular. The chain crosses the membrane as a helical span at residues 110 to 130 (LAYATFQMMFSCVNLSIIAGA). At 131 to 140 (TAERGRLLPH) the chain is on the cytoplasmic side. Residues 141 to 161 (MVFLFILATIGYCPVTYWIWS) form a helical membrane-spanning segment. The Extracellular portion of the chain corresponds to 162 to 174 (PGGWAYQWGVLDW). A helical membrane pass occupies residues 175–195 (AGGGNIEILSAVSGFVYSWFL). Residues 196-210 (GKRNEKLLINFRPHN) are Cytoplasmic-facing. A helical transmembrane segment spans residues 211 to 231 (VSLVTLGTSILWFGWLLFNSA). The Extracellular segment spans residues 232–240 (SSLSPNLRS). A helical transmembrane segment spans residues 241-261 (VYAFMNTCLSAITGGMTWCLL). Residues 262–268 (DYRSEKK) lie on the Cytoplasmic side of the membrane. Residues 269–289 (WSTVGLCSGIISGLVAATPSS) traverse the membrane as a helical segment. A topological domain (extracellular) is located at residue Gly-290. A helical transmembrane segment spans residues 291 to 311 (CITLYGSLIQGIVAGVVCNFA). The Cytoplasmic segment spans residues 312-331 (TKLKYYAKVDDAMDILAEHG). The helical transmembrane segment at 332–352 (VAGVIGLIFNALFGADWVIGM) threads the bilayer. The Extracellular portion of the chain corresponds to 353-373 (DGTTEHEGGWVTHNYKQMYKQ). The helical transmembrane segment at 374 to 394 (IAYIAASIGYTAAVTAIICFV) threads the bilayer. The Cytoplasmic portion of the chain corresponds to 395-492 (LGYIPGMRLR…PIHQEDPANR (98 aa)). A phosphoserine mark is found at Ser-442 and Ser-445. A disordered region spans residues 455–492 (HLAAERSSSGTNSSSDGNGEMIQSEKILPIHQEDPANR). Over residues 461–473 (SSSGTNSSSDGNG) the composition is skewed to low complexity.

This sequence belongs to the ammonia transporter channel (TC 1.A.11.2) family.

It localises to the membrane. Transporter for ammonium (both charged and uncharged NH3 and NH4) to use as a nitrogen source. Can also transport methylamine. The affinity of MEP1 is about twenty times lower than that of MEP2. MEP3 has the lowest affinity. The polypeptide is Ammonium transporter MEP1 (MEP1) (Saccharomyces cerevisiae (strain ATCC 204508 / S288c) (Baker's yeast)).